The primary structure comprises 630 residues: MIRPGKVLVLNFLKRSLSNLATFKGSEINTKKYDLKLPNNSDSNKQYFTLDEKLKVIQYTDANEESIIDEFILPLSSGAKASDTYQKTNLSKMRNLLTTFHIDEGESLPLSKPGYIKETPFEYHSKYNSDTSYVSIPRLSVTKLLTFQWCELREFYTIFSGSPVKKETKEMKLGTEAHLKLELETHNLIDVEDIERITDEFVEKKIDSSKRHINTLADPDDILLAKDDLSKLTELLHGAIPESSMANEWMSKIISRLFTLINTSEAREVLVHGYLDFQTSHFTSNLHDFQLNQSNLVLVSGVVDYLKLFNPHDKTDYSMFEDIQDHVEFTYSSQRKHQWIDLSQFLKDIDPIIKEYSDTYKIAITDVKTRSWNKLPQQESVLQAAKLQVEYYRNMFGILAGEFDDIEIGYEMLLENAKRRNLDVDKPISIKSALALLKANHTIILKDYVKLANGEAIGFESFDRFSQERYLNQGSEYDFTKVLEGTNREDYISQIKASDKDGFDFDEILTSDILKAWKIPLTLRYFAARSSQLFHLCKPFLSDSLSIEYHNVKKNDQCFHTNYYNYNANEIDEVTAKASAFWNGTRPPIPVQDLSKCNYCDFSSRCVIPNPHKNVPGSYGSVGSKMKHFI.

Residues 1 to 24 (MIRPGKVLVLNFLKRSLSNLATFK) constitute a mitochondrion transit peptide. The [4Fe-4S] cluster site is built by cysteine 150, cysteine 597, cysteine 600, and cysteine 606.

This sequence belongs to the EXO5 family. In terms of assembly, monomer. Requires Mg(2+) as cofactor. It depends on [4Fe-4S] cluster as a cofactor.

Its subcellular location is the mitochondrion. Functionally, single strand DNA specific 5' exonuclease involved in mitochondrial DNA replication and recombination. Releases dinucleotides as main products of catalysis. Has the capacity to slide across 5'double-stranded DNA or 5'RNA sequences and resumes cutting two nucleotides downstream of the double-stranded-to-single-stranded junction or RNA-to-DNA junction, respectively. This Debaryomyces hansenii (strain ATCC 36239 / CBS 767 / BCRC 21394 / JCM 1990 / NBRC 0083 / IGC 2968) (Yeast) protein is Exonuclease V, mitochondrial (EXO5).